The primary structure comprises 197 residues: Sodium/potassium-transporting ATPase subunit beta-1-interacting protein 3 (197 aa).

4 helical membrane passes run 2-22 (GCCT…VSAL), 35-55 (APIL…FGTI), 62-82 (IMVY…IICF), and 152-172 (VQIL…SISM).

The protein belongs to the NKAIN family. In terms of assembly, interacts with ATP1B1.

The protein resides in the cell membrane. In Homo sapiens (Human), this protein is Sodium/potassium-transporting ATPase subunit beta-1-interacting protein 3 (NKAIN3).